We begin with the raw amino-acid sequence, 148 residues long: Deoxyuridine 5'-triphosphate nucleotidohydrolase (148 aa).

Residues 67–69, N80, 84–86, and M94 contribute to the substrate site; these read RSG and LID.

Belongs to the dUTPase family. Requires Mg(2+) as cofactor.

It carries out the reaction dUTP + H2O = dUMP + diphosphate + H(+). It participates in pyrimidine metabolism; dUMP biosynthesis; dUMP from dCTP (dUTP route): step 2/2. Functionally, this enzyme is involved in nucleotide metabolism: it produces dUMP, the immediate precursor of thymidine nucleotides and it decreases the intracellular concentration of dUTP so that uracil cannot be incorporated into DNA. The protein is Deoxyuridine 5'-triphosphate nucleotidohydrolase of Burkholderia thailandensis (strain ATCC 700388 / DSM 13276 / CCUG 48851 / CIP 106301 / E264).